A 2322-amino-acid polypeptide reads, in one-letter code: Protein sidekick homolog (2322 aa).

The first 26 residues, 1-26 (MNYRIFLLFCTTTVLWSVVSTQLVLG), serve as a signal peptide directing secretion. Residues 27–2020 (KPPIFQNTGP…IPDDPFYTTW (1994 aa)) are Extracellular-facing. Ig-like C2-type domains lie at 28–105 (PPIF…AAIS), 217–319 (PSLQ…AYLT), and 324–397 (PVLK…ADMS). 3 disulfide bridges follow: cysteine 52-cysteine 94, cysteine 247-cysteine 301, and cysteine 345-cysteine 386. Asparagine 408 carries an N-linked (GlcNAc...) asparagine glycan. Ig-like C2-type domains follow at residues 450–545 (PFTS…VQVN) and 548–639 (SLIE…AMLQ). Intrachain disulfides connect cysteine 481/cysteine 529 and cysteine 569/cysteine 623. 2 N-linked (GlcNAc...) asparagine glycosylation sites follow: asparagine 633 and asparagine 656. 13 consecutive Fibronectin type-III domains span residues 646 to 752 (MPER…MPQQ), 757 to 854 (APRN…TAEG), 859 to 958 (APKN…TEED), 962 to 1056 (AVDE…VPPE), 1060 to 1155 (RPSM…TLQT), 1160 to 1255 (PSQR…TYES), 1260 to 1360 (SPRN…TLED), 1364 to 1458 (PPES…SSVR), 1464 to 1567 (APAP…TLPS), 1572 to 1672 (QPIS…VGYS), 1674 to 1774 (PKRN…LEDK), 1777 to 1873 (PVGV…SKDG), and 1908 to 2010 (QAKR…VPES). A disordered region spans residues 732 to 762 (SNKHGPGKPSLPSSSVTMPQQPPSAAPRNVA). 4 N-linked (GlcNAc...) asparagine glycosylation sites follow: asparagine 808, asparagine 869, asparagine 933, and asparagine 1017. A compositionally biased stretch (basic and acidic residues) spans 1040-1049 (GDGPVEETKF). The disordered stretch occupies residues 1040–1060 (GDGPVEETKFESGVPPELPGR). Residue asparagine 1108 is glycosylated (N-linked (GlcNAc...) asparagine). Residues 1139 to 1163 (GRGAPSEPSRTFETLQTNPETPSQR) are disordered. Polar residues predominate over residues 1146-1163 (PSRTFETLQTNPETPSQR). Asparagine 1615, asparagine 1677, and asparagine 1864 each carry an N-linked (GlcNAc...) asparagine glycan. A disordered region spans residues 1916–1965 (EETENGYVSQRPRRNEIRGAKSAAQTSASSNSNRPTHPIGEWITLRPTDG). Low complexity predominate over residues 1935–1947 (AKSAAQTSASSNS). A helical transmembrane segment spans residues 2021–2041 (WFMALVAMAAFVLIVIIIAIL). The Cytoplasmic segment spans residues 2042-2322 (CVTGSSAKYR…NLTAGFSSFV (281 aa)). Disordered stretches follow at residues 2081 to 2114 (NMTR…SVLG), 2167 to 2254 (YVVS…ADDI), and 2276 to 2322 (MVRA…SSFV). Residues 2092–2101 (PGTTQSWLSD) show a composition bias toward polar residues. A compositionally biased stretch (low complexity) spans 2207–2223 (PSSSGGSQPQGSPQQQQ). Over residues 2227–2238 (DSFDEEDDVDDD) the composition is skewed to acidic residues. 2 stretches are compositionally biased toward polar residues: residues 2282–2302 (LTNQ…STSE) and 2310–2322 (ATPN…SSFV).

This sequence belongs to the sidekick family.

The protein resides in the membrane. Cell adhesion protein. The protein is Protein sidekick homolog (rig-4) of Caenorhabditis briggsae.